A 406-amino-acid chain; its full sequence is CinA-like protein (406 aa).

Belongs to the CinA family.

This is CinA-like protein from Thermomicrobium roseum (strain ATCC 27502 / DSM 5159 / P-2).